Consider the following 147-residue polypeptide: D-aminoacyl-tRNA deacylase (147 aa).

The Gly-cisPro motif, important for rejection of L-amino acids motif lies at 136 to 137 (GP).

Belongs to the DTD family. In terms of assembly, homodimer.

It localises to the cytoplasm. It carries out the reaction glycyl-tRNA(Ala) + H2O = tRNA(Ala) + glycine + H(+). It catalyses the reaction a D-aminoacyl-tRNA + H2O = a tRNA + a D-alpha-amino acid + H(+). Its function is as follows. An aminoacyl-tRNA editing enzyme that deacylates mischarged D-aminoacyl-tRNAs. Also deacylates mischarged glycyl-tRNA(Ala), protecting cells against glycine mischarging by AlaRS. Acts via tRNA-based rather than protein-based catalysis; rejects L-amino acids rather than detecting D-amino acids in the active site. By recycling D-aminoacyl-tRNA to D-amino acids and free tRNA molecules, this enzyme counteracts the toxicity associated with the formation of D-aminoacyl-tRNA entities in vivo and helps enforce protein L-homochirality. The protein is D-aminoacyl-tRNA deacylase of Streptococcus pneumoniae (strain Taiwan19F-14).